The sequence spans 1300 residues: Histone-lysine N-methyltransferase Suv4-20 (1300 aa).

A disordered region spans residues Met-1 to Asn-136. Residues Gly-14 to Ser-62 show a composition bias toward low complexity. Residues Gln-79–Tyr-97 show a composition bias toward polar residues. Over residues Gly-116–Ser-128 the composition is skewed to gly residues. Positions Glu-255–Gly-366 constitute an SET domain. 5 disordered regions span residues Ser-432–Ala-490, Gln-535–Ala-574, His-669–Arg-744, Asn-756–Ile-856, and Ala-891–Leu-927. A compositionally biased stretch (low complexity) spans Asn-435–Thr-451. Residues Gly-452–Leu-462 are compositionally biased toward polar residues. Over residues Gln-536–Gly-557 the composition is skewed to basic residues. A compositionally biased stretch (low complexity) spans Ala-564–Ala-574. Basic and acidic residues-rich tracts occupy residues Arg-677 to Asp-688, Gln-698 to Asp-707, and Gln-722 to Lys-735. A compositionally biased stretch (low complexity) spans Asn-756–Glu-821. Polar residues-rich tracts occupy residues Asn-822–Pro-834 and Glu-911–Asn-923. Phosphoserine is present on residues Ser-831 and Ser-833. Thr-930 carries the phosphothreonine modification. Disordered regions lie at residues Ser-956 to Gly-988, Glu-1006 to Lys-1188, Ser-1212 to Gly-1233, and Gln-1263 to Lys-1300. Residues Asn-1009 to Glu-1029 are compositionally biased toward acidic residues. Residues Lys-1041–Gln-1055 show a composition bias toward basic residues. Low complexity-rich tracts occupy residues Ala-1117–Ala-1145 and Ser-1161–Thr-1178. Residues Ser-1289–Lys-1300 are compositionally biased toward basic residues.

It belongs to the class V-like SAM-binding methyltransferase superfamily. Histone-lysine methyltransferase family. Suvar4-20 subfamily.

The protein resides in the nucleus. The protein localises to the chromosome. It carries out the reaction L-lysyl(20)-[histone H4] + S-adenosyl-L-methionine = N(6)-methyl-L-lysyl(20)-[histone H4] + S-adenosyl-L-homocysteine + H(+). The catalysed reaction is N(6)-methyl-L-lysyl(20)-[histone H4] + S-adenosyl-L-methionine = N(6),N(6)-dimethyl-L-lysyl(20)-[histone H4] + S-adenosyl-L-homocysteine + H(+). It catalyses the reaction N(6),N(6)-dimethyl-L-lysyl(20)-[histone H4] + S-adenosyl-L-methionine = N(6),N(6),N(6)-trimethyl-L-lysyl(20)-[histone H4] + S-adenosyl-L-homocysteine + H(+). Its function is as follows. Histone methyltransferase that specifically trimethylates 'Lys-20' of histone H4. H4 'Lys-20' trimethylation represents a specific tag for epigenetic transcriptional repression. Mainly functions in pericentric heterochromatin regions, thereby playing a central role in the establishment of constitutive heterochromatin in these regions. Acts as a dominant suppressor of position-effect variegation. In Drosophila melanogaster (Fruit fly), this protein is Histone-lysine N-methyltransferase Suv4-20 (Hmt4-20).